Here is a 304-residue protein sequence, read N- to C-terminus: MVFLSSVETDQRKMSAGNHSSVTEFILAGLSEQPELQLRLFLLFLGIYVVTVVGNLSMITLIGLSSHLHTPMYYFLSGLSFIDLCHSTIITPKMLVNFVTEKNIISYPECMTQLYFFLIFAIAECHMLAVTAYDRYVAICSPLLYNVIMSYHHCFWLTVGVYVLGILGSTIHTGFMLRLFLCKTNVINHYFCDLFPLLGLSCSSTYINELLVLVLSAFNILTPALTILASYIFIIASILRIRSTEGRSKAFSTCSSHILAVAVFFGSAAFMYLQPSSVSSMDQRKVSSVFYTTIVPMLNPQSIA.

Over 1–41 (MVFLSSVETDQRKMSAGNHSSVTEFILAGLSEQPELQLRLF) the chain is Extracellular. Asn-18 carries an N-linked (GlcNAc...) asparagine glycan. The chain crosses the membrane as a helical span at residues 42 to 62 (LLFLGIYVVTVVGNLSMITLI). At 63–69 (GLSSHLH) the chain is on the cytoplasmic side. A helical membrane pass occupies residues 70 to 90 (TPMYYFLSGLSFIDLCHSTII). The Extracellular portion of the chain corresponds to 91–110 (TPKMLVNFVTEKNIISYPEC). A disulfide bond links Cys-110 and Cys-192. A helical transmembrane segment spans residues 111–130 (MTQLYFFLIFAIAECHMLAV). At 131–154 (TAYDRYVAICSPLLYNVIMSYHHC) the chain is on the cytoplasmic side. The chain crosses the membrane as a helical span at residues 155-175 (FWLTVGVYVLGILGSTIHTGF). Over 176-193 (MLRLFLCKTNVINHYFCD) the chain is Extracellular. A helical transmembrane segment spans residues 194–214 (LFPLLGLSCSSTYINELLVLV). Topologically, residues 215 to 217 (LSA) are cytoplasmic. The chain crosses the membrane as a helical span at residues 218-238 (FNILTPALTILASYIFIIASI). Residues 239–257 (LRIRSTEGRSKAFSTCSSH) lie on the Extracellular side of the membrane. The chain crosses the membrane as a helical span at residues 258–278 (ILAVAVFFGSAAFMYLQPSSV). Over 279 to 304 (SSMDQRKVSSVFYTTIVPMLNPQSIA) the chain is Cytoplasmic.

It belongs to the G-protein coupled receptor 1 family.

The protein localises to the cell membrane. In terms of biological role, odorant receptor. This chain is Olfactory receptor 8G2, found in Homo sapiens (Human).